Reading from the N-terminus, the 664-residue chain is Tripartite terminase subunit 1 (664 aa).

A C3H1-type zinc finger spans residues 205–233 (CHVCFEELCVTANQGATASRRLAGKICDH). Disordered regions lie at residues 273–295 (SKMT…AQER) and 440–466 (HAAE…GGPE). The span at 281 to 292 (GGPAEAPGPAAA) shows a compositional bias: low complexity.

It belongs to the herpesviridae TRM1 protein family. As to quaternary structure, associates with TRM2 and TRM3 to form the tripartite terminase complex. Interacts with portal protein.

Its subcellular location is the host nucleus. Functionally, component of the molecular motor that translocates viral genomic DNA in empty capsid during DNA packaging. Forms a tripartite terminase complex together with TRM2 and TRM3 in the host cytoplasm. Once the complex reaches the host nucleus, it interacts with the capsid portal vertex. This portal forms a ring in which genomic DNA is translocated into the capsid. TRM1 carries an endonuclease activity that plays an important role for the cleavage of concatemeric viral DNA into unit length genomes. The polypeptide is Tripartite terminase subunit 1 (Bos taurus (Bovine)).